Consider the following 451-residue polypeptide: Trigger factor (451 aa).

In terms of domain architecture, PPIase FKBP-type spans 173–258; the sequence is GDRVTVDFVG…LKKVEWAHLP (86 aa).

Belongs to the FKBP-type PPIase family. Tig subfamily.

It localises to the cytoplasm. It carries out the reaction [protein]-peptidylproline (omega=180) = [protein]-peptidylproline (omega=0). In terms of biological role, involved in protein export. Acts as a chaperone by maintaining the newly synthesized protein in an open conformation. Functions as a peptidyl-prolyl cis-trans isomerase. The polypeptide is Trigger factor (Cupriavidus taiwanensis (strain DSM 17343 / BCRC 17206 / CCUG 44338 / CIP 107171 / LMG 19424 / R1) (Ralstonia taiwanensis (strain LMG 19424))).